Reading from the N-terminus, the 940-residue chain is PTS system glucose-specific EIICBA component (940 aa).

A PTS EIIC type-1; first part domain is found at 1-284 (MQIKAQDTGQ…YAPLWYTSAG (284 aa)). 5 helical membrane-spanning segments follow: residues 43–63 (LMIPIAVLPIAGIFLGVGDAI), 83–103 (GGDVVFANLPILFAIAIAITF), 112–132 (FSAFVFWAAMNGFMSSLILPF), 175–195 (VFGGIIVGALTSVLYKKFYAI), and 209–229 (FVPIICFVVAIPVALILLMIW). A unknown region spans residues 285 to 478 (GSLQEIVNQQ…VNSFRVAVES (194 aa)). The PTS EIIC type-1; second part domain maps to 479 to 630 (LNPAQYSQGK…FNLATPGRGG (152 aa)). The next 5 helical transmembrane spans lie at 487 to 507 (GKFPFMLFGIPAAGVAMILAA), 515 to 535 (AASIVGSAAFTSFLTGITEPF), 537 to 557 (FTFLFLAPWLFYGVHAVLAAV), 564 to 584 (ILGANVGQTFSGSFIDFILYG), and 598 to 618 (LVPIIGLFLAAIYFPTFYFLI). In terms of domain architecture, PTS EIIB type-1 spans 661–743 (QIEAGILLQA…QDIIQGKVNW (83 aa)). Catalysis depends on C683, which acts as the Phosphocysteine intermediate; for EIIB activity. The 114-residue stretch at 794 to 907 (DETFKQKLVG…NPITPFVVMK (114 aa)) folds into the PTS EIIA type-1 domain. H847 (tele-phosphohistidine intermediate; for EIIA activity) is an active-site residue.

The protein localises to the cell membrane. It catalyses the reaction N(pros)-phospho-L-histidyl-[protein] + D-glucose(out) = D-glucose 6-phosphate(in) + L-histidyl-[protein]. In terms of biological role, the phosphoenolpyruvate-dependent sugar phosphotransferase system (sugar PTS), a major carbohydrate active transport system, catalyzes the phosphorylation of incoming sugar substrates concomitantly with their translocation across the cell membrane. This system is involved in glucose transport. This is PTS system glucose-specific EIICBA component (ptsG) from Mycoplasma pneumoniae (strain ATCC 29342 / M129 / Subtype 1) (Mycoplasmoides pneumoniae).